The following is a 726-amino-acid chain: MTEIDRSRAFAKDVKRIVVKVGTAVVTGKGGRLALGRLGAICEQLAELNSDGFEVILVSSGAVGLGRQRLRYRQLVNSSFADLQKPQMELDGKACAGVGQSSLMAYYETMFDQLDVTVAQMLVTDSSFRDKDFRKQLSETVKAMLRMRVIPVFNENDAISTRRAPYKDSTGIFWDNDSLAALLSLELKADLLILLSDVEGLYTGPPSDSTSKLIHTFIKEKHQDEITFGEKSKLGRGGMTAKVKAAVNAAYGGVPVIITSGYAAENISKVLRGLRVGTLFHQDAHLWAPVVDTTSRDMAVAARESSRKLQALSSEDRKQILHDIANALEVNEKTIKAENDLDVAAAQEAGYEESLVARLVMKPGKISSLAASVRQLAEMEDPIGRVLKKTQVADDLILEKTSSPIGVLLIVFESRPDALVQIASLAIRSGNGLLLKGGKEARRSNAILHKVITDAIPETVGGKLIGLVTSREEIPDLLKLDDVIDLVIPRGSNKLVSQIKNSTKIPVLGHADGICHVYVDKSGKLDMAKRIVSDAKLDYPAACNAMETLLVHKDLEQNGFLDDLIYVLQTKGVTLYGGPRASAKLNIPETKSFHHEYSSKACTVEIVEDVYGAIDHIHQHGSAHTDCIVTEDSEVAEIFLRQVDSAAVFHNASTRFSDGFRFGLGAEVGISTSRIHARGPVGVEGLLTTRWIMRGKGQVVDGDNGIVYTHKDLPVLQRTEAVENGI.

The segment at 1 to 296 (MTEIDRSRAF…WAPVVDTTSR (296 aa)) is glutamate 5-kinase. Residues serine 60, aspartate 157, and asparagine 176 each coordinate substrate. ATP contacts are provided by residues 196-197 (SD) and 236-242 (RGGMTAK). The tract at residues 297–717 (DMAVAARESS…YTHKDLPVLQ (421 aa)) is gamma-glutamyl phosphate reductase.

In the N-terminal section; belongs to the glutamate 5-kinase family. This sequence in the C-terminal section; belongs to the gamma-glutamyl phosphate reductase family.

The enzyme catalyses L-glutamate + ATP = L-glutamyl 5-phosphate + ADP. It catalyses the reaction L-glutamate 5-semialdehyde + phosphate + NADP(+) = L-glutamyl 5-phosphate + NADPH + H(+). Its pathway is amino-acid biosynthesis; L-proline biosynthesis; L-glutamate 5-semialdehyde from L-glutamate: step 1/2. The protein operates within amino-acid biosynthesis; L-proline biosynthesis; L-glutamate 5-semialdehyde from L-glutamate: step 2/2. In terms of biological role, P5CS plays a key role in proline biosynthesis, leading to osmoregulation in plants. In Arabidopsis thaliana (Mouse-ear cress), this protein is Delta-1-pyrroline-5-carboxylate synthase B (P5CSB).